The chain runs to 1454 residues: Probable cleavage and polyadenylation specificity factor subunit 1 (1454 aa).

Residues 736–765 form a disordered region; it reads KQSNTRKRKRLGHDAIQSSRGGEQSDAIDP.

The protein belongs to the CPSF1 family. In terms of assembly, CPSF is a heterotetramer composed of four distinct subunits 160 (cpsf-1), 100 (cpsf-2), 70 (cpsf-3), and 30 kDa (cpsf-4).

Its subcellular location is the nucleus. Its function is as follows. CPSF plays a key role in pre-mRNA 3'-end formation, recognizing the AAUAAA signal sequence and interacting with poly(A)polymerase and other factors to bring about cleavage and poly(A) addition. This subunit is involved in the RNA recognition step of the polyadenylation reaction. In Caenorhabditis elegans, this protein is Probable cleavage and polyadenylation specificity factor subunit 1 (cpsf-1).